A 105-amino-acid chain; its full sequence is Large ribosomal subunit protein bL21 (105 aa).

The protein belongs to the bacterial ribosomal protein bL21 family. In terms of assembly, part of the 50S ribosomal subunit. Contacts protein L20.

This protein binds to 23S rRNA in the presence of protein L20. In Dictyoglomus turgidum (strain DSM 6724 / Z-1310), this protein is Large ribosomal subunit protein bL21.